The sequence spans 265 residues: 6-oxopurine nucleoside phosphorylase (265 aa).

Phosphate is bound by residues Ser10, 49 to 50 (RH), and 82 to 83 (SA). Cystine bridges form between Cys136–Cys202 and Cys162–Cys190. Met187 contacts substrate. Thr188 contributes to the phosphate binding site. Substrate is bound at residue 211–213 (NYA). Cys254 and Cys256 are oxidised to a cystine.

This sequence belongs to the PNP/MTAP phosphorylase family. MTAP subfamily. Homohexamer. Dimer of a homotrimer.

It carries out the reaction a purine D-ribonucleoside + phosphate = a purine nucleobase + alpha-D-ribose 1-phosphate. The enzyme catalyses guanosine + phosphate = alpha-D-ribose 1-phosphate + guanine. The catalysed reaction is inosine + phosphate = alpha-D-ribose 1-phosphate + hypoxanthine. The protein operates within purine metabolism; purine nucleoside salvage. Purine nucleoside phosphorylase which is highly specific for 6-oxopurine nucleosides. Cleaves guanosine or inosine to respective bases and sugar-1-phosphate molecules. Involved in purine salvage. The chain is 6-oxopurine nucleoside phosphorylase from Pyrococcus furiosus (strain ATCC 43587 / DSM 3638 / JCM 8422 / Vc1).